The primary structure comprises 88 residues: Arminin 1a (88 aa).

Positions 1 to 18 (MKTVLAFLFLPFIAFTHA) are cleaved as a signal peptide. Positions 19 to 57 (ESYEDVKEEIKNEAEKEIFEDLEEESDALDSSVREFNDA) are excised as a propeptide. Valine 85 is modified (valine amide).

It belongs to the arminin family. In terms of tissue distribution, expressed in entodermal epithelium along the body column.

It localises to the secreted. Its subcellular location is the target cell membrane. Functionally, antimicrobial peptide with a broad-spectrum antimicrobial activity. Shows very strong bactericidal activity against B.megaterium (MBC=0.1 uM), E.coli (MBC=0.2 uM), S.aureus (MBC=0.4 uM), methicillin-resistant S.aureus (MRSA) (MBC=0.4-0.8 uM), vancomycin-resistant enterococci (VRE) (E.faecalis (MBC=1.6 uM), and E.faecium (MBC=0.4-0.8 uM)), and extended-spectrum beta-lactamase (ESBL)-producing enterobacteriaceae strains (K.pneumoniae (MBC=0.4-0.8 uM), E.coli (MBC=0.2-0.4 uM)). Keeps its antibacterial activity under a wide range of salt concentrations that mimic physiological conditions of human blood, which is surprising, since Hydra is an obligate freshwater animal with nearly no salt tolerance. Does not affect red blood cells. This is Arminin 1a from Hydra vulgaris (Hydra).